We begin with the raw amino-acid sequence, 837 residues long: MKTKNFPLNKIAFACTLLLANPVAWAEDQFDASLWGGGSVLGIDFARFNVKNAVLPGRYEAQIYVNNEEKGESDIIFADNPATGRAELCFTPKLQEMLDLMDEAIVKSPNSEDDTCVFASDAIPKGTFDYQGGDMKLKLEIPQALTIRRPRGYIAPSRWQTGTNAAFANYDINYYRSGNPEVKSESLYVGLRGGVNFGNWALRHNGSFSRFENQSSSGFTDKGKNHYERGDTYLQRDFALLRGNVTVGDFFSTARIGENFGLRGLRIASDDRMLAPSQRGFAPVVRGVANTNAKVSIKQNGYTIYQITVPAGPFVINDLYASGYSGDLTVEIQESDGKVRSFIVPFSNLAPLMRVGHLRYQLAGGRYRIDSRTFDERVLQGVLQYGLTNHLTLNSSLLYTRHYRAGLFGFGLNTPIGAFSADATWSHAEFPLKKVSKNGYSLHGSYSINFNEIGTNLTLAAYRYSSRDFYTLSDTIGLNRTFRQFSGAYLPEIYRPKNQFQVSLSQSLGNWGNLYLSGQTYNYWEKRGTNTQYQVAYSNSFHILNYSVNLSQSIDKETGKRDNSIYLSLSLPLGDNHSADSSYSRSGNDINQRLGVNGSFGERHQWSYGINASRNNQGYRSYDGNLSHNNSIGSYRASYSRDSLKNRSTSLGVSGAVVAHKYGITLSQPVGESFAIIHAKDAAGAKVESGANVSLDYFGNAVVPYTSPYEINYIGINPSDAEANVEFEATERQIIPRANSISLVDFRTGKNTMVLFNLTLPNGEPVPMASTAQDSEGAFVGDVVQGGVLFANKLTQPKGELIVKWGERESEQCRFHYQVDLDNAQIQNHDIQCKTAE.

Positions 1 to 26 are cleaved as a signal peptide; sequence MKTKNFPLNKIAFACTLLLANPVAWA. The cysteines at positions 813 and 833 are disulfide-linked.

Belongs to the fimbrial export usher family.

The protein resides in the cell outer membrane. Its function is as follows. Essential for piliation. This is Outer membrane usher protein HifC (hifC) from Haemophilus influenzae.